A 360-amino-acid chain; its full sequence is Phosphoserine aminotransferase (360 aa).

Arg42 contributes to the L-glutamate binding site. Pyridoxal 5'-phosphate-binding positions include 76–77 (AR), Trp102, Thr153, Asp172, and Gln195. Residue Lys196 is modified to N6-(pyridoxal phosphate)lysine. Position 237–238 (237–238 (NT)) interacts with pyridoxal 5'-phosphate.

Belongs to the class-V pyridoxal-phosphate-dependent aminotransferase family. SerC subfamily. In terms of assembly, homodimer. Pyridoxal 5'-phosphate is required as a cofactor.

It is found in the cytoplasm. It catalyses the reaction O-phospho-L-serine + 2-oxoglutarate = 3-phosphooxypyruvate + L-glutamate. It carries out the reaction 4-(phosphooxy)-L-threonine + 2-oxoglutarate = (R)-3-hydroxy-2-oxo-4-phosphooxybutanoate + L-glutamate. It participates in amino-acid biosynthesis; L-serine biosynthesis; L-serine from 3-phospho-D-glycerate: step 2/3. Its pathway is cofactor biosynthesis; pyridoxine 5'-phosphate biosynthesis; pyridoxine 5'-phosphate from D-erythrose 4-phosphate: step 3/5. Functionally, catalyzes the reversible conversion of 3-phosphohydroxypyruvate to phosphoserine and of 3-hydroxy-2-oxo-4-phosphonooxybutanoate to phosphohydroxythreonine. This chain is Phosphoserine aminotransferase, found in Aliivibrio fischeri (strain ATCC 700601 / ES114) (Vibrio fischeri).